We begin with the raw amino-acid sequence, 420 residues long: Tryptophan synthase beta chain (420 aa).

N6-(pyridoxal phosphate)lysine is present on Lys100.

Belongs to the TrpB family. Tetramer of two alpha and two beta chains. Pyridoxal 5'-phosphate serves as cofactor.

The enzyme catalyses (1S,2R)-1-C-(indol-3-yl)glycerol 3-phosphate + L-serine = D-glyceraldehyde 3-phosphate + L-tryptophan + H2O. Its pathway is amino-acid biosynthesis; L-tryptophan biosynthesis; L-tryptophan from chorismate: step 5/5. Functionally, the beta subunit is responsible for the synthesis of L-tryptophan from indole and L-serine. The protein is Tryptophan synthase beta chain of Pyrobaculum islandicum (strain DSM 4184 / JCM 9189 / GEO3).